Consider the following 489-residue polypeptide: ATP synthase subunit beta, chloroplastic (489 aa).

170-177 provides a ligand contact to ATP; the sequence is GGAGVGKT.

It belongs to the ATPase alpha/beta chains family. F-type ATPases have 2 components, CF(1) - the catalytic core - and CF(0) - the membrane proton channel. CF(1) has five subunits: alpha(3), beta(3), gamma(1), delta(1), epsilon(1). CF(0) has four main subunits: a(1), b(1), b'(1) and c(9-12).

Its subcellular location is the plastid. The protein resides in the chloroplast thylakoid membrane. The enzyme catalyses ATP + H2O + 4 H(+)(in) = ADP + phosphate + 5 H(+)(out). Its function is as follows. Produces ATP from ADP in the presence of a proton gradient across the membrane. The catalytic sites are hosted primarily by the beta subunits. This Zygnema circumcarinatum (Green alga) protein is ATP synthase subunit beta, chloroplastic.